The chain runs to 256 residues: POU domain class 2-associating factor 1 (256 aa).

The interval 1 to 23 (MLWQKPTAPEQAPAPARPYQGVR) is disordered. Residues 16-38 (ARPYQGVRVKEPVKELLRRKRGH) enclose the OCA domain.

Belongs to the POU2AF family. In terms of assembly, interacts with POU2F1/OCT1 and POU2F2/OCT2; the interaction increases POU2F1 and POU2F2 transactivation activity. Ubiquitinated; mediated by SIAH1 or SIAH2 and leading to its subsequent proteasomal degradation. In terms of tissue distribution, B-cell specific. Detected in mainly in spleen, but also in thymus, periphral blood leukocyte and small intestine.

It is found in the nucleus. Its function is as follows. Transcriptional coactivator that specifically associates with either POU2F1/OCT1 or POU2F2/OCT2. It boosts the POU2F1/OCT1 mediated promoter activity and to a lesser extent, that of POU2F2/OCT2. It recognizes the POU domains of POU2F1/OCT1 and POU2F2/OCT2. It is essential for the response of B-cells to antigens and required for the formation of germinal centers. Regulates IL6 expression in B cells as POU2F2/OCT2 coactivator. The sequence is that of POU domain class 2-associating factor 1 from Homo sapiens (Human).